The primary structure comprises 307 residues: Coproporphyrin III ferrochelatase (307 aa).

Fe-coproporphyrin III is bound by residues Y12, R29, 45–46 (RY), S53, and Y124. 2 residues coordinate Fe(2+): H181 and E263.

Belongs to the ferrochelatase family.

The protein resides in the cytoplasm. It catalyses the reaction Fe-coproporphyrin III + 2 H(+) = coproporphyrin III + Fe(2+). The protein operates within porphyrin-containing compound metabolism; protoheme biosynthesis. In terms of biological role, involved in coproporphyrin-dependent heme b biosynthesis. Catalyzes the insertion of ferrous iron into coproporphyrin III to form Fe-coproporphyrin III. It can also insert iron into protoporphyrin IX, but it has a much stronger preference for coproprophyrin III as the substrate. This chain is Coproporphyrin III ferrochelatase, found in Staphylococcus aureus (strain NCTC 8325 / PS 47).